Reading from the N-terminus, the 191-residue chain is Leucyl/phenylalanyl-tRNA--protein transferase (191 aa).

This sequence belongs to the L/F-transferase family.

The protein resides in the cytoplasm. The catalysed reaction is N-terminal L-lysyl-[protein] + L-leucyl-tRNA(Leu) = N-terminal L-leucyl-L-lysyl-[protein] + tRNA(Leu) + H(+). It catalyses the reaction N-terminal L-arginyl-[protein] + L-leucyl-tRNA(Leu) = N-terminal L-leucyl-L-arginyl-[protein] + tRNA(Leu) + H(+). It carries out the reaction L-phenylalanyl-tRNA(Phe) + an N-terminal L-alpha-aminoacyl-[protein] = an N-terminal L-phenylalanyl-L-alpha-aminoacyl-[protein] + tRNA(Phe). Functions in the N-end rule pathway of protein degradation where it conjugates Leu, Phe and, less efficiently, Met from aminoacyl-tRNAs to the N-termini of proteins containing an N-terminal arginine or lysine. The polypeptide is Leucyl/phenylalanyl-tRNA--protein transferase (Gloeothece citriformis (strain PCC 7424) (Cyanothece sp. (strain PCC 7424))).